Consider the following 241-residue polypeptide: 2-C-methyl-D-erythritol 4-phosphate cytidylyltransferase (241 aa).

Belongs to the IspD/TarI cytidylyltransferase family. IspD subfamily. As to quaternary structure, homodimer.

It catalyses the reaction 2-C-methyl-D-erythritol 4-phosphate + CTP + H(+) = 4-CDP-2-C-methyl-D-erythritol + diphosphate. The protein operates within isoprenoid biosynthesis; isopentenyl diphosphate biosynthesis via DXP pathway; isopentenyl diphosphate from 1-deoxy-D-xylulose 5-phosphate: step 2/6. Functionally, catalyzes the formation of 4-diphosphocytidyl-2-C-methyl-D-erythritol from CTP and 2-C-methyl-D-erythritol 4-phosphate (MEP). The sequence is that of 2-C-methyl-D-erythritol 4-phosphate cytidylyltransferase from Yersinia pseudotuberculosis serotype I (strain IP32953).